Consider the following 146-residue polypeptide: Large ribosomal subunit protein uL15 (146 aa).

Positions Met1–Arg13 are enriched in basic and acidic residues. Residues Met1–Gln54 are disordered. Positions Thr23–Gln35 are enriched in gly residues.

It belongs to the universal ribosomal protein uL15 family. In terms of assembly, part of the 50S ribosomal subunit.

In terms of biological role, binds to the 23S rRNA. The sequence is that of Large ribosomal subunit protein uL15 from Lactobacillus johnsonii (strain CNCM I-12250 / La1 / NCC 533).